The primary structure comprises 507 residues: Keratin, type II cuticular Hb5 (507 aa).

The tract at residues 1-123 (MSCRSYRISP…PNAQCVKYEE (123 aa)) is head. In terms of domain architecture, IF rod spans 123–434 (EKEQIKCLNS…RLLEGEEQRL (312 aa)). Positions 124–158 (KEQIKCLNSKFAAFIDKVRFLEQQNKLLETKWQFY) are coil 1A. Residues 159 to 168 (QNRKCCESNL) are linker 1. Residues 169 to 269 (EPLFGGYIEA…YEEEVCVLQA (101 aa)) form a coil 1B region. Lys229 participates in a covalent cross-link: Glycyl lysine isopeptide (Lys-Gly) (interchain with G-Cter in SUMO1). The tract at residues 270–286 (HISDTSVIVKMDNSRDL) is linker 12. The interval 287 to 430 (NMDCVVAEIK…ATYRRLLEGE (144 aa)) is coil 2. The tail stretch occupies residues 431-507 (EQRLCEGVGS…CGSSRSVRFA (77 aa)).

Belongs to the intermediate filament family. Heterotetramer of two type I and two type II keratins.

The sequence is that of Keratin, type II cuticular Hb5 (Krt85) from Mus musculus (Mouse).